We begin with the raw amino-acid sequence, 159 residues long: Keratin-associated protein 6-2 (159 aa).

The segment at 11–147 is 66 X 2 AA repeats of G-[YCGS]; that stretch reads GYGCGYGSGY…SYYRSGCCGY (137 aa).

It belongs to the KRTAP type 6 family. Interacts with hair keratins. Expressed in skin during two hair growth cycles. Expression restricted to the cortical cells of hair follicles, appearing first in the cortical cells processing the flat nuclei located a few cells above the dermal papilla.

Functionally, in the hair cortex, hair keratin intermediate filaments are embedded in an interfilamentous matrix, consisting of hair keratin-associated proteins (KRTAP), which are essential for the formation of a rigid and resistant hair shaft through their extensive disulfide bond cross-linking with abundant cysteine residues of hair keratins. The matrix proteins include the high-sulfur and high-glycine-tyrosine keratins. The sequence is that of Keratin-associated protein 6-2 from Mus musculus (Mouse).